Reading from the N-terminus, the 277-residue chain is Sulfur carrier protein FdhD (277 aa).

Cysteine 121 (cysteine persulfide intermediate) is an active-site residue. A Mo-bis(molybdopterin guanine dinucleotide)-binding site is contributed by phenylalanine 260 to arginine 265.

The protein belongs to the FdhD family.

The protein localises to the cytoplasm. In terms of biological role, required for formate dehydrogenase (FDH) activity. Acts as a sulfur carrier protein that transfers sulfur from IscS to the molybdenum cofactor prior to its insertion into FDH. This is Sulfur carrier protein FdhD from Escherichia coli O6:K15:H31 (strain 536 / UPEC).